Consider the following 325-residue polypeptide: UPF0285 protein MA_3856 (325 aa).

It belongs to the UPF0285 family.

The chain is UPF0285 protein MA_3856 from Methanosarcina acetivorans (strain ATCC 35395 / DSM 2834 / JCM 12185 / C2A).